A 130-amino-acid polypeptide reads, in one-letter code: Small ribosomal subunit protein uS9 (130 aa).

Belongs to the universal ribosomal protein uS9 family.

The protein is Small ribosomal subunit protein uS9 of Pseudomonas entomophila (strain L48).